Consider the following 166-residue polypeptide: Phospholipase A2 inhibitor clone 08 (166 aa).

The first 19 residues, 1–19, serve as a signal peptide directing secretion; it reads MRLILLSSLLLLGIFLANG. Positions 46–161 constitute a C-type lectin domain; it reads LKGAFLTVHR…CDDNLLVVCE (116 aa). Disulfide bonds link cysteine 83–cysteine 160 and cysteine 138–cysteine 152. Asparagine 122 carries an N-linked (GlcNAc...) asparagine glycan.

Belongs to the alpha-type phospholipase A2 inhibitor family. As to quaternary structure, homotrimer; non-covalently linked. Expressed by the liver.

It localises to the secreted. Its function is as follows. This phospholipase A2 inhibitor binds directly phospholipase A2 in the presence or absence of calcium. The chain is Phospholipase A2 inhibitor clone 08 from Bothrops moojeni (Lance-headed viper).